A 386-amino-acid polypeptide reads, in one-letter code: MEKIEEQFANLNIVKRSSETKEPTYLLGIDTSKTVQTEKGSLVAVLCSNGSIRIHDKERLNVIREFRGYPGLNGVKFANSHDSVYSSCTDGTVKCWDARLASGKPVQLFKGYPSNIFISFDISSNDHVICAGTEKVDDDALLVFWDARINSQDLSTTKEPLGAYSETHSDDITQVRFHPSNPNMVVSGSTDGLVNVFDISADNEDDALVTTCNSVSSVSFIGWSGKDYKQIYCMTHDEGFCWWDLNHLDTDEPITCLNVPDVREVINVKEGILDYLIGGLYHEKTDKLFVVGGTNTGIIRIMNCMTSGLVHVTSLQGGHAATVRSFCWNMQDDSLLTGGEDAQLLLWKPGAVEKTFTKKDSMKIASSVHQRVRVHSNDSYKRRKKQ.

WD repeat units follow at residues 21 to 65 (KEPT…VIRE), 68 to 106 (GYPG…GKPV), 111 to 155 (GYPS…QDLS), 167 to 207 (THSD…EDDA), 213 to 253 (NSVS…TDEP), and 318 to 357 (GHAA…KTFT).

This is WD repeat-containing protein 89 (WDR89) from Bos taurus (Bovine).